The chain runs to 230 residues: Ribonuclease 3 (230 aa).

The region spanning 8–135 is the RNase III domain; it reads IVELKEKLGI…LIGAVYLQTN (128 aa). Glu-48 is a binding site for Mg(2+). Residue Asp-52 is part of the active site. Residues Asp-121 and Glu-124 each contribute to the Mg(2+) site. Residue Glu-124 is part of the active site. Positions 161–230 constitute a DRBM domain; that stretch reads DYKTMIQELV…AHFAFQKLSK (70 aa).

Belongs to the ribonuclease III family. Homodimer. Mg(2+) is required as a cofactor.

It localises to the cytoplasm. It carries out the reaction Endonucleolytic cleavage to 5'-phosphomonoester.. Its function is as follows. Digests double-stranded RNA. Involved in the processing of primary rRNA transcript to yield the immediate precursors to the large and small rRNAs (23S and 16S). Processes some mRNAs, and tRNAs when they are encoded in the rRNA operon. Processes pre-crRNA and tracrRNA of type II CRISPR loci if present in the organism. This chain is Ribonuclease 3, found in Natranaerobius thermophilus (strain ATCC BAA-1301 / DSM 18059 / JW/NM-WN-LF).